Consider the following 304-residue polypeptide: Non-specific ribonucleoside hydrolase RihC (304 aa).

His-233 is an active-site residue.

It belongs to the IUNH family. RihC subfamily.

Hydrolyzes both purine and pyrimidine ribonucleosides with a broad-substrate specificity. The protein is Non-specific ribonucleoside hydrolase RihC of Klebsiella pneumoniae subsp. pneumoniae (strain ATCC 700721 / MGH 78578).